Reading from the N-terminus, the 209-residue chain is Large ribosomal subunit protein uL3 (209 aa).

The segment at 141–163 is disordered; the sequence is RAVGSMGASSDPSRTFKNKRMPG.

It belongs to the universal ribosomal protein uL3 family. In terms of assembly, part of the 50S ribosomal subunit. Forms a cluster with proteins L14 and L19.

Its function is as follows. One of the primary rRNA binding proteins, it binds directly near the 3'-end of the 23S rRNA, where it nucleates assembly of the 50S subunit. The protein is Large ribosomal subunit protein uL3 of Clostridium botulinum (strain Kyoto / Type A2).